Consider the following 383-residue polypeptide: Ovalbumin (383 aa).

N-acetylglycine is present on Gly2. A signal peptide (not cleaved) is located at residues 22–48 (HHANDNMLYSPFAILSTLAMVFLGAKD). The residue at position 69 (Ser69) is a Phosphoserine. A disulfide bond links Cys74 and Cys121. Residues Asn293 and Asn312 are each glycosylated (N-linked (GlcNAc...) asparagine). The residue at position 345 (Ser345) is a Phosphoserine.

It belongs to the serpin family. Ov-serpin subfamily. The signal sequence is not cleaved. The functional signal for membrane translocation of ovalbumin becomes accessible when the nascent chain is 50 to 60 residues long. The hydrophobic sequence which lies between residues 27 and 43 folds back on the preceding residues to form an amphipathic hairpin structure which is the signal element recognized by the membrane. Major protein of egg white.

It is found in the secreted. Its function is as follows. Storage protein of egg white. Lack protease inhibitory activity. In Coturnix japonica (Japanese quail), this protein is Ovalbumin (SERPINB14).